The sequence spans 242 residues: Beta-carotene ketolase (242 aa).

The catalysed reaction is all-trans-beta-carotene + 2 AH2 + 2 O2 = echinenone + 2 A + 3 H2O. It catalyses the reaction echinenone + 2 AH2 + 2 O2 = canthaxanthin + 2 A + 3 H2O. It participates in carotenoid biosynthesis; astaxanthin biosynthesis. In terms of biological role, converts beta-carotene to canthaxanthin via echinenone. The protein is Beta-carotene ketolase of Paracoccus sp. (strain PC1) (Alcaligenes sp. (strain PC1)).